The primary structure comprises 252 residues: Body wall muscle protein HR-29 (252 aa).

At serine 2 the chain carries N-acetylserine. Repeat copies occupy residues 37–55 (RDWM…RDLS), 56–74 (QDWM…RDLS), and 75–93 (QDWM…RNLS). The 3 X 19 AA approximate tandem repeats stretch occupies residues 37 to 93 (RDWMTTPYSSTGIGRRDLSQDWMTTPYTPAGVGRRDLSQDWMTTPYTSKGIGSRNLS). A sHSP domain is found at 138 to 249 (ISVEHEGKTT…KKTAVPVTVE (112 aa)).

The protein belongs to the small heat shock protein (HSP20) family. In terms of assembly, exists as an oligomer.

The protein resides in the membrane. May be a component of myofibrils where it acts as a stabilizer. The chain is Body wall muscle protein HR-29 from Halocynthia roretzi (Sea squirt).